We begin with the raw amino-acid sequence, 709 residues long: MSGGKSGTKLSSFQNLQQIGQGGFGVVYSAQRENGEKVAIKKIGNAASQTRIKEEIKTMKLLRHRNIVQFYETFFENGETYLVMELCEGGSLMDYVKQKGPLDDSTAVHILRQLIAAVKYIHDENILHRDLSAGNVFIKDATKSTITVKLGDFGLATNLGQHGTACTIVGTPGFIAPQVFGQNYDQAADVYSLGAVLYTMLTKHTPPTKGPPNLESLKKRNPSAADLVERMMHTDARRRIQLKEIVMTDYVKAKMGEATPGSREHSRDSRSQRSREPFRSSRDGISLERRPPARSSSQPVNSRRDPDGYRAAHEMPTTSRTSVEPDRARVRHRLSARGIGSSQEDDLRQQIWPIRMERLVGQRVRTPGGRYIVEMNTRCRFEVVSKGNIVLRILVVEYDPHLLIQTVYVHKMSNRVEHARNETDDLIELTRSPISYTSLSQLPKEVMNDYMRLEKMMVSTIASRVAKITHRRPSQFPDASAQLMENGDLRIRFPNSLIVRRKSNGEVHNYIDGFANNKEEVRGLQLSKVREVYACLTQLEQCLSRMNPTMKILPMVFSAGPDIVATYNNSPSSILPSTSSQASRFPFSEISSSQQLVPHSAPIPNKPLSSRTTSSLNVRNGVSSDENTAPAATRQKYKARLDPVTGRIVSVQAEDNRKLRCSTSKPDQFIFTDPSISSSEQRFMRNGRVPERASEMLHALLVYMKKKQN.

A Protein kinase domain is found at 13 to 251; the sequence is FQNLQQIGQG…LKEIVMTDYV (239 aa). Residues 19–27 and Lys-41 contribute to the ATP site; that span reads IGQGGFGVV. The Proton acceptor role is filled by Asp-130. 2 disordered regions span residues 254 to 329 and 591 to 633; these read KMGE…DRAR and SSSQ…PAAT. Composition is skewed to basic and acidic residues over residues 262–291 and 302–313; these read SREH…ERRP and SRRDPDGYRAAH. The span at 607 to 627 shows a compositional bias: polar residues; sequence PLSSRTTSSLNVRNGVSSDEN.

This sequence belongs to the protein kinase superfamily. Ser/Thr protein kinase family.

It localises to the cytoplasm. It is found in the cytoskeleton. The protein localises to the microtubule organizing center. Its subcellular location is the centrosome. The protein resides in the centriole. The enzyme catalyses L-seryl-[protein] + ATP = O-phospho-L-seryl-[protein] + ADP + H(+). The catalysed reaction is L-threonyl-[protein] + ATP = O-phospho-L-threonyl-[protein] + ADP + H(+). Functionally, protein kinase that plays a central role in centrosome duplication. Paternal copy is required to regulate synthesis of daughter centrioles prior to fertilization. Maternal copy regulates centrosome duplication during later cell cycles. Functions upstream of sas-5 and sas-6, and is required for their localization to the centrosome. The protein is Probable serine/threonine-protein kinase zyg-1 (zyg-1) of Caenorhabditis briggsae.